The primary structure comprises 3232 residues: D-lysergyl-peptide-synthetase subunit 1 (3232 aa).

Residues 90–474 form an adenylation (A) domain 1 region; the sequence is GCLTYDEMSI…LGRKDDQVKI (385 aa). One can recognise a Carrier 1 domain in the interval 617 to 686; the sequence is REKLLQGCFA…TLREIVIVST (70 aa). Residue S649 is modified to O-(pantetheine 4'-phosphoryl)serine. The condensation (C) domain 1 stretch occupies residues 731–1122; that stretch reads EDIYPCTHLQ…EHILTQIHSN (392 aa). Residues 1165–1572 are adenylation (A) domain 2; it reads QAKCQAQPDA…RRKDAQVKIR (408 aa). One can recognise a Carrier 2 domain in the interval 1717–1785; sequence TEHEISAIWA…TIRKLALARG (69 aa). S1749 carries the post-translational modification O-(pantetheine 4'-phosphoryl)serine. The condensation (C) domain 2 stretch occupies residues 1835-2252; it reads ERIYPCSPIQ…ALPVLDEDQM (418 aa). The interval 2276–2675 is adenylation (A) domain 3; it reads QQCLRCPDSP…GRNDDQVKVR (400 aa). The region spanning 2810–2878 is the Carrier 3 domain; it reads MEAELQRLVG…RVSDLARIVE (69 aa). At S2842 the chain carries O-(pantetheine 4'-phosphoryl)serine. The segment at 2943–3218 is cyclization (Cyc) domain; that stretch reads LYFSKPVASE…LLHWLHQQHI (276 aa).

Belongs to the NRP synthetase family.

The protein operates within alkaloid biosynthesis; ergot alkaloid biosynthesis. Functionally, D-lysergyl-peptide-synthetase subunit 1; part of the gene cluster that mediates the biosynthesis of fungal ergot alkaloid. DmaW catalyzes the first step of ergot alkaloid biosynthesis by condensing dimethylallyl diphosphate (DMAP) and tryptophan to form 4-dimethylallyl-L-tryptophan. The second step is catalyzed by the methyltransferase easF that methylates 4-dimethylallyl-L-tryptophan in the presence of S-adenosyl-L-methionine, resulting in the formation of 4-dimethylallyl-L-abrine. The catalase easC and the FAD-dependent oxidoreductase easE then transform 4-dimethylallyl-L-abrine to chanoclavine-I which is further oxidized by easD in the presence of NAD(+), resulting in the formation of chanoclavine-I aldehyde. Agroclavine dehydrogenase easG then mediates the conversion of chanoclavine-I aldehyde to agroclavine via a non-enzymatic adduct reaction: the substrate is an iminium intermediate that is formed spontaneously from chanoclavine-I aldehyde in the presence of glutathione. The presence of easA is not required to complete this reaction. Further conversion of agroclavine to paspalic acid is a two-step process involving oxidation of agroclavine to elymoclavine and of elymoclavine to paspalic acid, the second step being performed by the elymoclavine oxidase cloA. Paspalic acid is then further converted to D-lysergic acid. Ergopeptines are assembled from D-lysergic acid and three different amino acids by the D-lysergyl-peptide-synthetases composed each of a monomudular and a trimodular nonribosomal peptide synthetase subunit. LpsB and lpsC encode the monomodular subunits responsible for D-lysergic acid activation and incorporation into the ergopeptine backbone. LpsA1 and A2 subunits encode the trimodular nonribosomal peptide synthetase assembling the tripeptide portion of ergopeptines. LpsA1 is responsible for formation of the major ergopeptine, ergotamine, and lpsA2 for alpha-ergocryptine, the minor ergopeptine of the total alkaloid mixture elaborated by C.purpurea. D-lysergyl-tripeptides are assembled by the nonribosomal peptide synthetases and released as N-(D-lysergyl-aminoacyl)-lactams. Cyclolization of the D-lysergyl-tripeptides is performed by the Fe(2+)/2-ketoglutarate-dependent dioxygenase easH which introduces a hydroxyl group into N-(D-lysergyl-aminoacyl)-lactam at alpha-C of the aminoacyl residue followed by spontaneous condensation with the terminal lactam carbonyl group. The polypeptide is D-lysergyl-peptide-synthetase subunit 1 (Claviceps purpurea (Ergot fungus)).